The following is a 102-amino-acid chain: Pyrimidine/purine nucleoside phosphorylase (102 aa).

This sequence belongs to the nucleoside phosphorylase PpnP family.

The enzyme catalyses a purine D-ribonucleoside + phosphate = a purine nucleobase + alpha-D-ribose 1-phosphate. The catalysed reaction is adenosine + phosphate = alpha-D-ribose 1-phosphate + adenine. It catalyses the reaction cytidine + phosphate = cytosine + alpha-D-ribose 1-phosphate. It carries out the reaction guanosine + phosphate = alpha-D-ribose 1-phosphate + guanine. The enzyme catalyses inosine + phosphate = alpha-D-ribose 1-phosphate + hypoxanthine. The catalysed reaction is thymidine + phosphate = 2-deoxy-alpha-D-ribose 1-phosphate + thymine. It catalyses the reaction uridine + phosphate = alpha-D-ribose 1-phosphate + uracil. It carries out the reaction xanthosine + phosphate = alpha-D-ribose 1-phosphate + xanthine. Catalyzes the phosphorolysis of diverse nucleosides, yielding D-ribose 1-phosphate and the respective free bases. Can use uridine, adenosine, guanosine, cytidine, thymidine, inosine and xanthosine as substrates. Also catalyzes the reverse reactions. The chain is Pyrimidine/purine nucleoside phosphorylase from Shewanella amazonensis (strain ATCC BAA-1098 / SB2B).